The primary structure comprises 282 residues: Bifunctional protein FolD (282 aa).

NADP(+) contacts are provided by residues 162–164, serine 187, and valine 228; that span reads GRS.

Belongs to the tetrahydrofolate dehydrogenase/cyclohydrolase family. Homodimer.

It catalyses the reaction (6R)-5,10-methylene-5,6,7,8-tetrahydrofolate + NADP(+) = (6R)-5,10-methenyltetrahydrofolate + NADPH. It carries out the reaction (6R)-5,10-methenyltetrahydrofolate + H2O = (6R)-10-formyltetrahydrofolate + H(+). Its pathway is one-carbon metabolism; tetrahydrofolate interconversion. In terms of biological role, catalyzes the oxidation of 5,10-methylenetetrahydrofolate to 5,10-methenyltetrahydrofolate and then the hydrolysis of 5,10-methenyltetrahydrofolate to 10-formyltetrahydrofolate. In Thermus thermophilus (strain ATCC 27634 / DSM 579 / HB8), this protein is Bifunctional protein FolD.